Here is a 1157-residue protein sequence, read N- to C-terminus: MSLFGVGFLAFAKGKRVCAIGRSSLGKISDPLEVPNLLDLQLDSFDWLIGGPRWRAALDAYRKNPSGAPIAEKSGLDEVFDEISPIEDSAGNMQLNFSKPVLEAEELSVRECRVRGRTYSAPLYVEAEFMNHDTGEIKTQTVFMGDFPLMTDKGTFVINGTERVVVSQLVRSPGVYFERTPEKNSEKDLFSGRIIPARGAWLEFEVDRHDQLGVRVDRKRRQPVIFFLRAIGMTDDEIRDAFGEFESISVQHEKNIGLSRDDALREIYRRVRPGEQASAEAGRALLENFYFTSRRFDLARVGRYKVNRKLGVDVDPTRMVLTRSDIIATIRYLAALHLGFSEVAVLNSNKSVPISTDDIDHLGNRRIRPVGELVQNQLRAGLARMERVVRERMTTQDIEAIIPQTLINVMPIVAALKEFYGTSQLSQFMDQNNPLAGLTHKRRLSALGPGGLSRERAGVEVRDVNPSHYGRMCPIETPEGPNIGLIGSLACYSRVNSFGFIETPYRRVVNGKVTDDIEYMTATQEDEHAIAQASTPLRPDNSFVDERVLVRRKGGEVEVVPADQVDYMDVSGRQMVSVATSLIPFLEHNDANRALMGSNMQRQAVPLLVTESPLVGTGMERYVAIDAGDVLIAEDPGIVGDVSADVVTVKQDDGKHRDYHVGKFVRSNQGNCYNQRVVVRSGDRVEKGTVLADGPCTDKGELSLGRNLLVAFMPWEGYNFEDAIIISQNLVKDDTLSSIHIEEHEVSTRDTKLGSEEITRDLPNVSMDYIKDLDERGIIRIGAEVGPGDILVGKVTPKGETELSAEERLLRAIFNEKSMEVRDTSLKVPHGQQGTVIDVKLFDAVDGEDKLGAGINQRVVVYIAHKRKITEGDKLAGRHGNKGVISKILPVEDMPFMADGTPVDIILNPLGVPARMNFGQVLETHLGWISKQGWKIEGDPDWAKDIRVREAQPDSRVSSPVFDGISEGEITGLFSSVFPNRDGERAVGSDGKAILYDGRTGEPFPEPISVGYMYVLKLHHLVDDKIHARSTGPYSMITQQPLGGKAQFGGQRFGEMEVWALEAYGAAHALQELLTIKSDDVVGRVKVYDAIVKGYPIPTPGVPESFKVIVKEMQSLCINIEVVSDGEDDVSADAETLQIEEGLDTSPKVEVGSLEEV.

It belongs to the RNA polymerase beta chain family. In terms of assembly, the RNAP catalytic core consists of 2 alpha, 1 beta, 1 beta' and 1 omega subunit. When a sigma factor is associated with the core the holoenzyme is formed, which can initiate transcription.

The catalysed reaction is RNA(n) + a ribonucleoside 5'-triphosphate = RNA(n+1) + diphosphate. Functionally, DNA-dependent RNA polymerase catalyzes the transcription of DNA into RNA using the four ribonucleoside triphosphates as substrates. The protein is DNA-directed RNA polymerase subunit beta of Tropheryma whipplei (strain TW08/27) (Whipple's bacillus).